Reading from the N-terminus, the 412-residue chain is Serine hydroxymethyltransferase (412 aa).

(6S)-5,6,7,8-tetrahydrofolate contacts are provided by residues leucine 117 and 121-123 (GHL). The residue at position 226 (lysine 226) is an N6-(pyridoxal phosphate)lysine. (6S)-5,6,7,8-tetrahydrofolate is bound at residue 349–351 (SPF).

Belongs to the SHMT family. As to quaternary structure, homodimer. Requires pyridoxal 5'-phosphate as cofactor.

Its subcellular location is the cytoplasm. It catalyses the reaction (6R)-5,10-methylene-5,6,7,8-tetrahydrofolate + glycine + H2O = (6S)-5,6,7,8-tetrahydrofolate + L-serine. The protein operates within one-carbon metabolism; tetrahydrofolate interconversion. It functions in the pathway amino-acid biosynthesis; glycine biosynthesis; glycine from L-serine: step 1/1. Its function is as follows. Catalyzes the reversible interconversion of serine and glycine with tetrahydrofolate (THF) serving as the one-carbon carrier. This reaction serves as the major source of one-carbon groups required for the biosynthesis of purines, thymidylate, methionine, and other important biomolecules. Also exhibits THF-independent aldolase activity toward beta-hydroxyamino acids, producing glycine and aldehydes, via a retro-aldol mechanism. The protein is Serine hydroxymethyltransferase of Nitratidesulfovibrio vulgaris (strain ATCC 29579 / DSM 644 / CCUG 34227 / NCIMB 8303 / VKM B-1760 / Hildenborough) (Desulfovibrio vulgaris).